The sequence spans 88 residues: MTRTVHCRKYNKEMEGLAVPPLPGAKGTELFNSVSKQAWQEWLQHQTMLINEKQLNLMDLTARAYLTEQMEKFLSGADYDQADGYVPK.

This sequence belongs to the Fe(2+)-trafficking protein family.

In terms of biological role, could be a mediator in iron transactions between iron acquisition and iron-requiring processes, such as synthesis and/or repair of Fe-S clusters in biosynthetic enzymes. In Teredinibacter turnerae (strain ATCC 39867 / T7901), this protein is Probable Fe(2+)-trafficking protein.